A 242-amino-acid polypeptide reads, in one-letter code: ATP-dependent dethiobiotin synthetase BioD (242 aa).

Position 12–17 (12–17 (SVGKTI)) interacts with ATP. T16 is a Mg(2+) binding site. Residue K37 is part of the active site. An ATP-binding site is contributed by D66. D66 and E124 together coordinate Mg(2+). ATP is bound at residue 184 to 185 (NR).

This sequence belongs to the dethiobiotin synthetase family. Homodimer. The cofactor is Mg(2+).

It localises to the cytoplasm. It catalyses the reaction (7R,8S)-7,8-diammoniononanoate + CO2 + ATP = (4R,5S)-dethiobiotin + ADP + phosphate + 3 H(+). The protein operates within cofactor biosynthesis; biotin biosynthesis; biotin from 7,8-diaminononanoate: step 1/2. Its function is as follows. Catalyzes a mechanistically unusual reaction, the ATP-dependent insertion of CO2 between the N7 and N8 nitrogen atoms of 7,8-diaminopelargonic acid (DAPA, also called 7,8-diammoniononanoate) to form a ureido ring. The polypeptide is ATP-dependent dethiobiotin synthetase BioD (Mannheimia succiniciproducens (strain KCTC 0769BP / MBEL55E)).